Consider the following 93-residue polypeptide: Alpha-defensin 9 (93 aa).

Positions 1–19 are cleaved as a signal peptide; that stretch reads MKTLVLLSALVLLAFQVQA. Residues 20–58 constitute a propeptide that is removed on maturation; that stretch reads DPIQNTDEETKTEEQPGEEDQAVSVSFGDPEGSSLQEES. Residues 23-56 form a disordered region; sequence QNTDEETKTEEQPGEEDQAVSVSFGDPEGSSLQE. Disulfide bonds link C64/C92, C66/C81, and C71/C91.

Belongs to the alpha-defensin family. As to expression, paneth cells of the small bowel.

It is found in the secreted. In terms of biological role, probably contributes to the antimicrobial barrier function of the small bowel mucosa. The polypeptide is Alpha-defensin 9 (Defa9) (Mus musculus (Mouse)).